The following is a 324-amino-acid chain: MSASPQSRPTTIACLLGPTASGKTAAALALAARRPIEIVSIDSALVYRDMDIGTAKPTRDERARVPHHLIDIIDPADAYSAAEFRADALRLIGEIAARGRTPLLAGGTMLYYKALTQGLNDLPTADPAVRAELDADAARDGWPALHARLAQVDPATAARLAPNDSQRIQRALEVFLLSGQPMSVLLAAPRRADDEAAAYRFVPVALEPSDRAVLHARIAQRFDAMLDAGFIDEVERLRRREDLHPDLPSMRCVGYRQAWEFLDGDTDYRTMRDKGIFATRQLCKRQITWLRALPERIVVDCVAPDATARALDTLERVLDDHLPA.

G17–T24 is a binding site for ATP. T19–T24 contacts substrate. Interaction with substrate tRNA regions lie at residues D42–L45, Q166–R170, R251–R256, and K284–R291.

Belongs to the IPP transferase family. As to quaternary structure, monomer. It depends on Mg(2+) as a cofactor.

The catalysed reaction is adenosine(37) in tRNA + dimethylallyl diphosphate = N(6)-dimethylallyladenosine(37) in tRNA + diphosphate. Its function is as follows. Catalyzes the transfer of a dimethylallyl group onto the adenine at position 37 in tRNAs that read codons beginning with uridine, leading to the formation of N6-(dimethylallyl)adenosine (i(6)A). This Burkholderia ambifaria (strain MC40-6) protein is tRNA dimethylallyltransferase.